The following is a 176-amino-acid chain: Xanthine-guanine phosphoribosyltransferase (176 aa).

Residues 51–52 (RG), Arg88, and 111–119 (DDLVDSGKT) contribute to the 5-phospho-alpha-D-ribose 1-diphosphate site. Arg88 lines the GMP pocket. Asp112 serves as a coordination point for Mg(2+). The guanine site is built by Asp115 and Ile158. Xanthine contacts are provided by Asp115 and Ile158. Residues 115–119 (DSGKT) and 157–158 (WI) each bind GMP.

Belongs to the purine/pyrimidine phosphoribosyltransferase family. XGPT subfamily. In terms of assembly, homotetramer. Requires Mg(2+) as cofactor.

Its subcellular location is the cell inner membrane. The catalysed reaction is GMP + diphosphate = guanine + 5-phospho-alpha-D-ribose 1-diphosphate. It catalyses the reaction XMP + diphosphate = xanthine + 5-phospho-alpha-D-ribose 1-diphosphate. It carries out the reaction IMP + diphosphate = hypoxanthine + 5-phospho-alpha-D-ribose 1-diphosphate. It participates in purine metabolism; GMP biosynthesis via salvage pathway; GMP from guanine: step 1/1. Its pathway is purine metabolism; XMP biosynthesis via salvage pathway; XMP from xanthine: step 1/1. In terms of biological role, purine salvage pathway enzyme that catalyzes the transfer of the ribosyl-5-phosphate group from 5-phospho-alpha-D-ribose 1-diphosphate (PRPP) to the N9 position of the 6-oxopurines guanine and xanthine to form the corresponding ribonucleotides GMP (guanosine 5'-monophosphate) and XMP (xanthosine 5'-monophosphate), with the release of PPi. To a lesser extent, also acts on hypoxanthine. The protein is Xanthine-guanine phosphoribosyltransferase of Roseobacter denitrificans (strain ATCC 33942 / OCh 114) (Erythrobacter sp. (strain OCh 114)).